Reading from the N-terminus, the 372-residue chain is MACNSTSLEAYTYLLLNTSNASDSGSTQLPAPLRISLAIVMLLMTVVGFLGNTVVCIIVYQRPAMRSAINLLLATLAFSDIMLSLCCMPFTAVTLITVRWHFGDHFCRLSATLYWFFVLEGVAILLIISVDRFLIIVQRQDKLNPRRAKVIIAVSWVLSFCIAGPSLTGWTLVEVPARAPQCVLGYTELPADRAYVVTLVVAVFFAPFGVMLCAYMCILNTVRKNAVRVHNQSDSLDLRQLTRAGLRRLQRQQQVSVDLSFKTKAFTTILILFVGFSLCWLPHSVYSLLSVFSQRFYCGSSFYATSTCVLWLSYLKSVFNPIVYCWRIKKFREACIELLPQTFQILPKVPERIRRRIQPSTVYVCNENQSAV.

Residues 1–38 (MACNSTSLEAYTYLLLNTSNASDSGSTQLPAPLRISLA) lie on the Extracellular side of the membrane. Asn4, Asn17, and Asn20 each carry an N-linked (GlcNAc...) asparagine glycan. Residues 39–59 (IVMLLMTVVGFLGNTVVCIIV) traverse the membrane as a helical segment. Residues 60–75 (YQRPAMRSAINLLLAT) lie on the Cytoplasmic side of the membrane. Residues 76–96 (LAFSDIMLSLCCMPFTAVTLI) traverse the membrane as a helical segment. At 97–109 (TVRWHFGDHFCRL) the chain is on the extracellular side. Residues 110–130 (SATLYWFFVLEGVAILLIISV) form a helical membrane-spanning segment. Residues 131–149 (DRFLIIVQRQDKLNPRRAK) lie on the Cytoplasmic side of the membrane. Residues 150–170 (VIIAVSWVLSFCIAGPSLTGW) traverse the membrane as a helical segment. At 171 to 198 (TLVEVPARAPQCVLGYTELPADRAYVVT) the chain is on the extracellular side. A helical transmembrane segment spans residues 199 to 219 (LVVAVFFAPFGVMLCAYMCIL). Residues 220–268 (NTVRKNAVRVHNQSDSLDLRQLTRAGLRRLQRQQQVSVDLSFKTKAFTT) are Cytoplasmic-facing. The helical transmembrane segment at 269–289 (ILILFVGFSLCWLPHSVYSLL) threads the bilayer. Topologically, residues 290–305 (SVFSQRFYCGSSFYAT) are extracellular. The chain crosses the membrane as a helical span at residues 306–326 (STCVLWLSYLKSVFNPIVYCW). At 327-372 (RIKKFREACIELLPQTFQILPKVPERIRRRIQPSTVYVCNENQSAV) the chain is on the cytoplasmic side.

The protein belongs to the G-protein coupled receptor 1 family. Expressed in brain; detected in the basal forebrain, frontal cortex, and caudate, but not in thalamus, hippocampus, or putamen.

It localises to the cell membrane. Functionally, orphan receptor. May play a role in brain function. The polypeptide is Probable G-protein coupled receptor 45 (GPR45) (Homo sapiens (Human)).